The primary structure comprises 206 residues: Ribonuclease HII (206 aa).

The RNase H type-2 domain occupies 27 to 206 (ARIAGVDEAG…CALHRRSFKH (180 aa)). A divalent metal cation contacts are provided by Asp-33, Glu-34, and Asp-125.

The protein belongs to the RNase HII family. It depends on Mn(2+) as a cofactor. Mg(2+) serves as cofactor.

Its subcellular location is the cytoplasm. The enzyme catalyses Endonucleolytic cleavage to 5'-phosphomonoester.. In terms of biological role, endonuclease that specifically degrades the RNA of RNA-DNA hybrids. The polypeptide is Ribonuclease HII (Moorella thermoacetica (strain ATCC 39073 / JCM 9320)).